Consider the following 120-residue polypeptide: Fumarate reductase subunit D (120 aa).

Helical transmembrane passes span 25 to 45, 55 to 75, and 100 to 120; these read FAML…LGVI, VAGF…ISMP, and IACY…IFMI.

Belongs to the FrdD family. In terms of assembly, part of an enzyme complex containing four subunits: a flavoprotein (FrdA), an iron-sulfur protein (FrdB), and two hydrophobic anchor proteins (FrdC and FrdD).

It localises to the cell inner membrane. In terms of biological role, anchors the catalytic components of the fumarate reductase complex to the cell membrane, binds quinones. This Aliivibrio salmonicida (strain LFI1238) (Vibrio salmonicida (strain LFI1238)) protein is Fumarate reductase subunit D.